Consider the following 429-residue polypeptide: Histidine--tRNA ligase (429 aa).

Belongs to the class-II aminoacyl-tRNA synthetase family. Homodimer.

The protein localises to the cytoplasm. It carries out the reaction tRNA(His) + L-histidine + ATP = L-histidyl-tRNA(His) + AMP + diphosphate + H(+). The protein is Histidine--tRNA ligase of Streptococcus pneumoniae serotype 4 (strain ATCC BAA-334 / TIGR4).